We begin with the raw amino-acid sequence, 227 residues long: Prolactin (227 aa).

An N-terminal signal peptide occupies residues 1 to 28; that stretch reads MNIKGSPWKGSLLLLLVSNLLLCQNVAP. An intrachain disulfide couples cysteine 32 to cysteine 39. At serine 54 the chain carries Phosphoserine. N-linked (GlcNAc...) asparagine glycosylation occurs at asparagine 59. Phosphoserine occurs at positions 62 and 118. 2 disulfide bridges follow: cysteine 86–cysteine 202 and cysteine 219–cysteine 227.

This sequence belongs to the somatotropin/prolactin family. Interacts with PRLR.

Its subcellular location is the secreted. Functionally, prolactin acts primarily on the mammary gland by promoting lactation. This chain is Prolactin (PRL), found in Macaca mulatta (Rhesus macaque).